A 216-amino-acid polypeptide reads, in one-letter code: Large ribosomal subunit protein uL3 (216 aa).

Gln-153 bears the N5-methylglutamine mark.

Belongs to the universal ribosomal protein uL3 family. In terms of assembly, part of the 50S ribosomal subunit. Forms a cluster with proteins L14 and L19. Post-translationally, methylated by PrmB.

Its function is as follows. One of the primary rRNA binding proteins, it binds directly near the 3'-end of the 23S rRNA, where it nucleates assembly of the 50S subunit. This is Large ribosomal subunit protein uL3 from Burkholderia ambifaria (strain MC40-6).